The primary structure comprises 719 residues: Protein borderless (719 aa).

An N-terminal signal peptide occupies residues 1–33 (MPAKRSRTFRQSGSALLALLAIILLMNISCTSA). Residues 34 to 650 (ARDHRRQTNL…IDVPSQRKVR (617 aa)) are Extracellular-facing. Ig-like domains follow at residues 40–128 (QTNL…CQVS), 134–241 (PSVR…AFLN), 246–334 (AKVI…PVIS), and 341–429 (PIFS…AELM). Disulfide bonds link C55-C125, C172-C224, C267-C318, and C363-C413. 2 consecutive Fibronectin type-III domains span residues 434 to 527 (APRA…TLPS) and 555 to 646 (APWN…VPSQ). A helical membrane pass occupies residues 651 to 671 (ALIIGSSVGVIFLLCALCAFL). Residues 672-719 (YVKRSCLRHLFAKDSSASEDEDTAESGDCDSDEQDQRDRDSIKIRQST) are Cytoplasmic-facing. The segment at 685–719 (DSSASEDEDTAESGDCDSDEQDQRDRDSIKIRQST) is disordered. Positions 688-704 (ASEDEDTAESGDCDSDE) are enriched in acidic residues. A compositionally biased stretch (basic and acidic residues) spans 705–719 (QDQRDRDSIKIRQST).

This sequence belongs to the immunoglobulin superfamily. Interacts with tutl. As to expression, in the visual system, expressed in lamina and medulla (at protein level).

It is found in the cell membrane. The protein resides in the cell projection. Its subcellular location is the axon. Functionally, in the developing eye, has a role in axonal targeting of the R7 photoreceptor where it functions together with tutl. Probably mediates homotypic cell adhesion; the effect is inhibited by Lar. The sequence is that of Protein borderless from Drosophila melanogaster (Fruit fly).